We begin with the raw amino-acid sequence, 511 residues long: 2,3-bisphosphoglycerate-independent phosphoglycerate mutase (511 aa).

Asp12 serves as a coordination point for Mn(2+). Position 36 is a phosphotyrosine (Tyr36). Position 62 (Ser62) interacts with Mn(2+). Ser62 acts as the Phosphoserine intermediate in catalysis. Substrate is bound by residues His123, 153-154 (RD), Arg185, Arg191, 261-264 (RPDR), and Lys336. Residues Asp403, His407, Asp444, His445, and His462 each contribute to the Mn(2+) site.

Belongs to the BPG-independent phosphoglycerate mutase family. As to quaternary structure, monomer. The cofactor is Mn(2+).

The enzyme catalyses (2R)-2-phosphoglycerate = (2R)-3-phosphoglycerate. The protein operates within carbohydrate degradation; glycolysis; pyruvate from D-glyceraldehyde 3-phosphate: step 3/5. Functionally, catalyzes the interconversion of 2-phosphoglycerate and 3-phosphoglycerate. This is 2,3-bisphosphoglycerate-independent phosphoglycerate mutase from Geobacillus kaustophilus (strain HTA426).